Consider the following 493-residue polypeptide: Betaine aldehyde dehydrogenase (493 aa).

Residues Ser32, Ile33, and Asp99 each contribute to the K(+) site. 156-158 serves as a coordination point for NAD(+); it reads GAW. The active-site Charge relay system is the Lys168. Residues 182–185 and 235–238 contribute to the NAD(+) site; these read KPSE and SVPT. Leu250 is a binding site for K(+). Glu256 acts as the Proton acceptor in catalysis. 3 residues coordinate NAD(+): Gly258, Cys290, and Glu390. Cys290 acts as the Nucleophile in catalysis. At Cys290 the chain carries Cysteine sulfenic acid (-SOH). Residues Lys460 and Gly463 each coordinate K(+). The active-site Charge relay system is the Glu467.

It belongs to the aldehyde dehydrogenase family. Dimer of dimers. K(+) is required as a cofactor.

The enzyme catalyses betaine aldehyde + NAD(+) + H2O = glycine betaine + NADH + 2 H(+). It participates in amine and polyamine biosynthesis; betaine biosynthesis via choline pathway; betaine from betaine aldehyde: step 1/1. Its function is as follows. Involved in the biosynthesis of the osmoprotectant glycine betaine. Catalyzes the irreversible oxidation of betaine aldehyde to the corresponding acid. This Agrobacterium fabrum (strain C58 / ATCC 33970) (Agrobacterium tumefaciens (strain C58)) protein is Betaine aldehyde dehydrogenase.